Reading from the N-terminus, the 460-residue chain is Argininosuccinate lyase (460 aa).

This sequence belongs to the lyase 1 family. Argininosuccinate lyase subfamily.

It localises to the cytoplasm. The enzyme catalyses 2-(N(omega)-L-arginino)succinate = fumarate + L-arginine. It functions in the pathway amino-acid biosynthesis; L-arginine biosynthesis; L-arginine from L-ornithine and carbamoyl phosphate: step 3/3. This is Argininosuccinate lyase from Parvibaculum lavamentivorans (strain DS-1 / DSM 13023 / NCIMB 13966).